A 263-amino-acid chain; its full sequence is MAPK-interacting and spindle-stabilizing protein (263 aa).

A disordered region spans residues 13-238 (GSPAPFLPSG…LGKQQGHNTT (226 aa)). Pro residues-rich tracts occupy residues 14–34 (SPAP…PYPG) and 140–155 (GLQP…PPGP). The segment covering 156–165 (SAASPGPGSL) has biased composition (low complexity). Residues 176–189 (PSDSSNPESTLEST) are compositionally biased toward polar residues. Over residues 202 to 213 (IKRRRSKKKSKR) the composition is skewed to basic residues.

This sequence belongs to the MISS family. In terms of assembly, interacts with MAPK1. Post-translationally, phosphorylated in vitro by MAPK1.

The protein resides in the cytoplasm. It is found in the cytoskeleton. Its subcellular location is the spindle. Involved in the maintenance of the spindle integrity during the cytostatic factor (CSF) arrest of oocytes. The polypeptide is MAPK-interacting and spindle-stabilizing protein (Mapk1ip1) (Mus musculus (Mouse)).